A 902-amino-acid polypeptide reads, in one-letter code: MSQSKEDKIRSILEAKNIKSNFQNKENLSEFNEKKASKRAEDLLDVYYNTLSTADMEFPYWYNREYRKSDGDIPVVRRAKALKAAFSHMTPNIIPGEKIVMQKTRHYRGSFPMPWVSESFFVAQGEQMREEAKKLASNTADELTKFGSGGGNVTESFGNVVSIAGKFGMRKEEVPVLVKMAKEWVGKSVEDLGFHYEKMMPDYDLKENLMSTLICMFDSGYTLPQGREVINYFYPLNYGLDGIIEMAKECKKAVAGNASGDGLIGMDRLYFYEAVIQVIEGLQTWILNYAKHAKYLESIETDLEAKKEYSDLVEILEHIAHKQPRTFREALQLTYTIHIASVNEDAISGMSIGRFGQILYPWYEQDIEKGLITKEEVIELLELYRIKITCIDCFASAGVNGGVLSGNTFNTLSIGGLKEDGSTGANELEELLLEASMRCRTPQPSLTMLYDEKLPEDFLMKAAECTKLGSGYPAWVNNSNGTTFMMKQFADEGMTVEEARAFALGGCLETSPGCWKQLTLNGKTYSIAGGAGQSAGSGVHFIANPKILELVLMNGKDHRMNIQVFEPHNKPLDTYEEVIEVFKDYYKQAINVLERANNIELDIWRKFDTSIINSLLKPDCLDKGQHIGNMGYRYNATLNVETCGTVTMVNSFAALKKLVYDDKAFTIEEMKDAILNNFGFKDALEVGNYSMADQVKVDKTGKYDAIYKACLDAPKYGNNDLYADNILKNYEVWLSKVCEEAQSLYAKKMYPCQISVSTHGPQGAATLATPDGRLSGTTYSDGSVSAYAGTDKNGVYALFESATIWDQAVVQNSQMNLKLHPTTIKGQQGTKKLLDLTRSYLRKGGFHIQYNVVDSETLKDAQKNPDNYRQLMVRVAGFTQYWCELGKPIQDEVIARTEYEGV.

The 737-residue stretch at 38-774 (KRAEDLLDVY…ATLATPDGRL (737 aa)) folds into the PFL domain. 2 residues coordinate 4-hydroxyphenylacetate: serine 348 and cysteine 507. Cysteine 507 functions as the Cysteine radical intermediate in the catalytic mechanism. The Proton donor role is filled by glutamate 509. 2 residues coordinate 4-hydroxyphenylacetate: histidine 540 and glutamate 641. The region spanning 782-902 (GSVSAYAGTD…VIARTEYEGV (121 aa)) is the Glycine radical domain. Glycine 877 carries the post-translational modification Glycine radical.

It belongs to the glycyl radical enzyme (GRE) family. HPAD subfamily. Heterooctamer consisting of 4 large (HpdB) subunits and 4 small (HpdC) subunits, arranged as a tetramer of heterodimers. Also forms a catalytically inactive homodimer. Post-translationally, requires the activating protein CsdA to generate the key active site glycyl radical that is involved in catalysis. Phosphorylated on serine. Phosphorylation may trigger the formation of the active heterooctamers and thereby regulates enzyme activity.

It catalyses the reaction 4-hydroxyphenylacetate + H(+) = 4-methylphenol + CO2. The catalysed reaction is 3,4-dihydroxyphenylacetate + H(+) = 4-methylcatechol + CO2. In terms of biological role, glycyl radical subunit of the HPA decarboxylase that decarboxylates phenylacetates with a hydroxyl group in the p-position. Active toward 4-hydroxyphenylacetate and 3,4-dihydroxyphenylacetate, forming 4-methylphenol and 4-methylcatechol, respectively. Is likely involved in the catabolism of aromatic amino acids such as tyrosine fermentation. 4-methylphenol (p-cresol) formation provides metabolic toxicity, which allows an active suppression of other microbes and may provide growth advantages for the producers in highly competitive environments. The large subunit is the catalytic subunit that binds the substrate. This is 4-hydroxyphenylacetate decarboxylase glycyl radical subunit from Clostridioides difficile (strain CD196) (Peptoclostridium difficile).